Consider the following 86-residue polypeptide: Large ribosomal subunit protein bL27 (86 aa).

It belongs to the bacterial ribosomal protein bL27 family.

This is Large ribosomal subunit protein bL27 from Christiangramia forsetii (strain DSM 17595 / CGMCC 1.15422 / KT0803) (Gramella forsetii).